We begin with the raw amino-acid sequence, 167 residues long: Small heat shock protein C1 (167 aa).

The sHSP domain occupies 59 to 167; the sequence is PLYESNSIKS…EQDAREITIN (109 aa).

Belongs to the small heat shock protein (HSP20) family.

The polypeptide is Small heat shock protein C1 (hspC1) (Rickettsia felis (strain ATCC VR-1525 / URRWXCal2) (Rickettsia azadi)).